A 361-amino-acid chain; its full sequence is Cytochrome P450 family protein EryCII (361 aa).

This sequence belongs to the cytochrome P450 family. Heterotetramer composed of EryCII and EryCIII.

It participates in antibiotic biosynthesis; erythromycin biosynthesis. Functionally, involved in the erythromycin biosynthesis pathway. Acts by forming a complex and stabilizing the desosaminyl transferase EryCIII. The protein is Cytochrome P450 family protein EryCII (eryCII) of Saccharopolyspora erythraea (strain ATCC 11635 / DSM 40517 / JCM 4748 / NBRC 13426 / NCIMB 8594 / NRRL 2338).